Consider the following 244-residue polypeptide: Mediator of RNA polymerase II transcription subunit 8 (244 aa).

The stretch at 6–30 forms a coiled coil; sequence QEQLKTLEQSRQRLVQLTRSLASLI.

The protein belongs to the Mediator complex subunit 8 family. Component of the Mediator complex.

The protein localises to the nucleus. Its function is as follows. Component of the Mediator complex, a coactivator involved in the regulated transcription of nearly all RNA polymerase II-dependent genes. Mediator functions as a bridge to convey information from gene-specific regulatory proteins to the basal RNA polymerase II transcription machinery. Mediator is recruited to promoters by direct interactions with regulatory proteins and serves as a scaffold for the assembly of a functional preinitiation complex with RNA polymerase II and the general transcription factors. The chain is Mediator of RNA polymerase II transcription subunit 8 (med8) from Aspergillus oryzae (strain ATCC 42149 / RIB 40) (Yellow koji mold).